Here is a 160-residue protein sequence, read N- to C-terminus: Small ribosomal subunit protein uS7 (160 aa).

It belongs to the universal ribosomal protein uS7 family. Part of the 30S ribosomal subunit. Contacts proteins S9 and S11.

Its function is as follows. One of the primary rRNA binding proteins, it binds directly to 16S rRNA where it nucleates assembly of the head domain of the 30S subunit. Is located at the subunit interface close to the decoding center, probably blocks exit of the E-site tRNA. The polypeptide is Small ribosomal subunit protein uS7 (Anaplasma phagocytophilum (strain HZ)).